A 93-amino-acid chain; its full sequence is Large ribosomal subunit protein uL23 (93 aa).

This sequence belongs to the universal ribosomal protein uL23 family. Part of the 50S ribosomal subunit. Contacts protein L29, and trigger factor when it is bound to the ribosome.

Its function is as follows. One of the early assembly proteins it binds 23S rRNA. One of the proteins that surrounds the polypeptide exit tunnel on the outside of the ribosome. Forms the main docking site for trigger factor binding to the ribosome. The polypeptide is Large ribosomal subunit protein uL23 (Natranaerobius thermophilus (strain ATCC BAA-1301 / DSM 18059 / JW/NM-WN-LF)).